An 861-amino-acid polypeptide reads, in one-letter code: DNA mismatch repair protein MutS (861 aa).

616 to 623 (GPNMGGKS) is an ATP binding site.

It belongs to the DNA mismatch repair MutS family.

Functionally, this protein is involved in the repair of mismatches in DNA. It is possible that it carries out the mismatch recognition step. This protein has a weak ATPase activity. The sequence is that of DNA mismatch repair protein MutS from Haemophilus influenzae (strain 86-028NP).